Reading from the N-terminus, the 687-residue chain is MARQYPLNKFRNIGIMAHIDAGKTTSTERILFYTGKTHKIGETHEGAATMDWMVQEQERGITITSAATTCFWKDHQINIIDTPGHVDFTVEVERSLRVLDSAITILDAKGGVEPQTETVWRQADKYQVPRMIFVNKMDILGADFYMSVQTVRDRLRANAVPIQIPIGKEDDYAGHVDLIKMKAVIFDKELGVNYDEVEIPEDLKDKAEEYRSAMIEAIVETDEELMMKYLEGEEISEEEIHTALRKATIANEIVPVLCGTAYKNKGIQHLLDAVLAYLPSPLDIPSIKGVDEDGNEVERHASDDEPLGALAFKIATDPFVGKLAFVRIYSGVMHSGSYVLNSNKNKKERIGRLVKMHANHREEVEELYAGELGAVIGLKNTTTGDTLCDENAPVILESMEFPEPVISVAIEPKTKAAQEKMGIALAKLAEEDPTFKTYTDQETGQVIIAGMGELHLEIIVDRLQREFKVECNVGAPQVAYKETIKNAVKAEGKFVRQSGGRGQYGHCWIELIPHEGEYEFENAIVGGAIPREYIPAVDNGIQEAAQSGILGGYPVINFKVKCYDGSYHDVDSSEMAFKVAGSMAFKNGMAKATPVLLEPVMKVEIVVPEEYMGDVMGDVNSRRGRIEGMNPRGGAQVIAAFVPLSEMFGYATVLRSRTQGRGTYSMEFANYEEVPKSIAEKVVGENK.

A tr-type G domain is found at 8–282; that stretch reads NKFRNIGIMA…AVLAYLPSPL (275 aa). GTP-binding positions include 17-24, 81-85, and 135-138; these read AHIDAGKT, DTPGH, and NKMD.

It belongs to the TRAFAC class translation factor GTPase superfamily. Classic translation factor GTPase family. EF-G/EF-2 subfamily.

The protein localises to the cytoplasm. Catalyzes the GTP-dependent ribosomal translocation step during translation elongation. During this step, the ribosome changes from the pre-translocational (PRE) to the post-translocational (POST) state as the newly formed A-site-bound peptidyl-tRNA and P-site-bound deacylated tRNA move to the P and E sites, respectively. Catalyzes the coordinated movement of the two tRNA molecules, the mRNA and conformational changes in the ribosome. This chain is Elongation factor G, found in Clostridium novyi (strain NT).